We begin with the raw amino-acid sequence, 572 residues long: Glutathione hydrolase 1 (572 aa).

The N-terminal stretch at 1–22 (MSLVRTVTIVLFIIAFLQNAAA) is a signal peptide. L-glutamate is bound at residue Arg-99. 2 N-linked (GlcNAc...) asparagine glycosylation sites follow: Asn-171 and Asn-222. Residue Thr-368 is the Nucleophile of the active site. L-glutamate contacts are provided by residues Thr-386, Asn-388, Glu-407, Asp-410, 440-441 (SS), and 461-462 (GG). Asn-505 carries an N-linked (GlcNAc...) asparagine glycan. The disordered stretch occupies residues 552–572 (GGRSELVAVSDPRKGGFPSGY).

Belongs to the gamma-glutamyltransferase family. Expressed in embryo, roots and leaves. In mature plants, expression is restricted to vascular tissues of roots, leaves, flowers and siliques.

Its subcellular location is the secreted. It localises to the extracellular space. The protein localises to the apoplast. The catalysed reaction is an N-terminal (5-L-glutamyl)-[peptide] + an alpha-amino acid = 5-L-glutamyl amino acid + an N-terminal L-alpha-aminoacyl-[peptide]. The enzyme catalyses glutathione + H2O = L-cysteinylglycine + L-glutamate. It carries out the reaction an S-substituted glutathione + H2O = an S-substituted L-cysteinylglycine + L-glutamate. It functions in the pathway sulfur metabolism; glutathione metabolism. In terms of biological role, may play a role in preventing oxidative stress by metabolizing extracellular oxidized glutathione (GSSG). The sequence is that of Glutathione hydrolase 1 (GGT1) from Arabidopsis thaliana (Mouse-ear cress).